The sequence spans 124 residues: Small ribosomal subunit protein uS12 (124 aa).

Positions 1–28 (MPTINQLVRKGRTPKVSKTKAPALKGSP) are disordered. Residues 9 to 18 (RKGRTPKVSK) show a composition bias toward basic residues. Asp89 is modified (3-methylthioaspartic acid).

The protein belongs to the universal ribosomal protein uS12 family. In terms of assembly, part of the 30S ribosomal subunit. Contacts proteins S8 and S17. May interact with IF1 in the 30S initiation complex.

Its function is as follows. With S4 and S5 plays an important role in translational accuracy. In terms of biological role, interacts with and stabilizes bases of the 16S rRNA that are involved in tRNA selection in the A site and with the mRNA backbone. Located at the interface of the 30S and 50S subunits, it traverses the body of the 30S subunit contacting proteins on the other side and probably holding the rRNA structure together. The combined cluster of proteins S8, S12 and S17 appears to hold together the shoulder and platform of the 30S subunit. This chain is Small ribosomal subunit protein uS12, found in Paenarthrobacter aurescens (strain TC1).